Consider the following 200-residue polypeptide: Dephospho-CoA kinase (200 aa).

The DPCK domain occupies 4-200; the sequence is TIGLTGSVAT…TFIKRFVKNK (197 aa). An ATP-binding site is contributed by 12–17; sequence ATGKST.

It belongs to the CoaE family.

The protein localises to the cytoplasm. The enzyme catalyses 3'-dephospho-CoA + ATP = ADP + CoA + H(+). Its pathway is cofactor biosynthesis; coenzyme A biosynthesis; CoA from (R)-pantothenate: step 5/5. In terms of biological role, catalyzes the phosphorylation of the 3'-hydroxyl group of dephosphocoenzyme A to form coenzyme A. The sequence is that of Dephospho-CoA kinase from Listeria monocytogenes serotype 4b (strain F2365).